The following is a 422-amino-acid chain: Glutamyl-tRNA reductase (422 aa).

Substrate is bound by residues 49-52 (TCNR), Ser107, 112-114 (EPQ), and Gln118. The active-site Nucleophile is the Cys50. 187–192 (GAGETI) is a binding site for NADP(+).

This sequence belongs to the glutamyl-tRNA reductase family. Homodimer.

The catalysed reaction is (S)-4-amino-5-oxopentanoate + tRNA(Glu) + NADP(+) = L-glutamyl-tRNA(Glu) + NADPH + H(+). It functions in the pathway porphyrin-containing compound metabolism; protoporphyrin-IX biosynthesis; 5-aminolevulinate from L-glutamyl-tRNA(Glu): step 1/2. Functionally, catalyzes the NADPH-dependent reduction of glutamyl-tRNA(Glu) to glutamate 1-semialdehyde (GSA). The sequence is that of Glutamyl-tRNA reductase from Pseudomonas aeruginosa (strain ATCC 15692 / DSM 22644 / CIP 104116 / JCM 14847 / LMG 12228 / 1C / PRS 101 / PAO1).